The sequence spans 499 residues: C2H2-type transcription factor RPN4 (499 aa).

A disordered region spans residues 329–397; the sequence is QTTKKDNSKP…TTKSTHTHSK (69 aa). Residues 331–344 are compositionally biased toward basic and acidic residues; sequence TKKDNSKPVEKTVV. Residues 345–363 are compositionally biased toward polar residues; that stretch reads EKTSSVTKAGSNHSRSTLA. A C2H2-type zinc finger spans residues 405–436; that stretch reads FVCELVNSVTNEVCGAQFSRTYDLTRHQNTIH.

It is found in the nucleus. In terms of biological role, transcription factor that acts as a transcriptional activator of a number of genes encoding proteasomal subunits. Plays a role in ergosterol and plasma membrane homeostasis, and subsequent azole resistance. Regulates the expression of 212 genes, activating 80 genes and repressing, likely in an indirect fashion, 132 genes. Targets comprise several proteasome and ergosterol biosynthesis genes, including ERG1, ERG2, ERG3, and ERG11. Directly regulates ERG11 expression through the 3'-TTGCAAA-5' binding motif. The chain is C2H2-type transcription factor RPN4 from Candida glabrata (strain ATCC 2001 / BCRC 20586 / JCM 3761 / NBRC 0622 / NRRL Y-65 / CBS 138) (Yeast).